Here is a 149-residue protein sequence, read N- to C-terminus: uncharacterized protein (149 aa).

A helical membrane pass occupies residues 12-31 (FKNLVIGAVSGVAAAYFLST).

It localises to the membrane. This is an uncharacterized protein from Streptococcus pyogenes serotype M6 (strain ATCC BAA-946 / MGAS10394).